A 600-amino-acid polypeptide reads, in one-letter code: Isocitrate dehydrogenase kinase/phosphatase (600 aa).

ATP contacts are provided by residues 335-341 (APGIRGM) and lysine 356. Residue aspartate 390 is part of the active site.

It belongs to the AceK family.

The protein localises to the cytoplasm. It carries out the reaction L-seryl-[isocitrate dehydrogenase] + ATP = O-phospho-L-seryl-[isocitrate dehydrogenase] + ADP + H(+). In terms of biological role, bifunctional enzyme which can phosphorylate or dephosphorylate isocitrate dehydrogenase (IDH) on a specific serine residue. This is a regulatory mechanism which enables bacteria to bypass the Krebs cycle via the glyoxylate shunt in response to the source of carbon. When bacteria are grown on glucose, IDH is fully active and unphosphorylated, but when grown on acetate or ethanol, the activity of IDH declines drastically concomitant with its phosphorylation. The chain is Isocitrate dehydrogenase kinase/phosphatase from Bordetella parapertussis (strain 12822 / ATCC BAA-587 / NCTC 13253).